A 129-amino-acid chain; its full sequence is NADPH-dependent 7-cyano-7-deazaguanine reductase (129 aa).

Catalysis depends on C34, which acts as the Thioimide intermediate. D41 serves as the catalytic Proton donor. Residues V56–L58 and H75–E76 contribute to the substrate site.

Belongs to the GTP cyclohydrolase I family. QueF type 1 subfamily.

The protein localises to the cytoplasm. It carries out the reaction 7-aminomethyl-7-carbaguanine + 2 NADP(+) = 7-cyano-7-deazaguanine + 2 NADPH + 3 H(+). The protein operates within tRNA modification; tRNA-queuosine biosynthesis. In terms of biological role, catalyzes the NADPH-dependent reduction of 7-cyano-7-deazaguanine (preQ0) to 7-aminomethyl-7-deazaguanine (preQ1). This chain is NADPH-dependent 7-cyano-7-deazaguanine reductase, found in Nitrosococcus oceani (strain ATCC 19707 / BCRC 17464 / JCM 30415 / NCIMB 11848 / C-107).